The chain runs to 126 residues: Large ribosomal subunit protein bL12 (126 aa).

The protein belongs to the bacterial ribosomal protein bL12 family. In terms of assembly, homodimer. Part of the ribosomal stalk of the 50S ribosomal subunit. Forms a multimeric L10(L12)X complex, where L10 forms an elongated spine to which 2 to 4 L12 dimers bind in a sequential fashion. Binds GTP-bound translation factors.

Its function is as follows. Forms part of the ribosomal stalk which helps the ribosome interact with GTP-bound translation factors. Is thus essential for accurate translation. In Desulforudis audaxviator (strain MP104C), this protein is Large ribosomal subunit protein bL12.